Reading from the N-terminus, the 302-residue chain is 33 kDa chaperonin (302 aa).

Intrachain disulfides connect C234-C236 and C267-C270.

It belongs to the HSP33 family. Post-translationally, under oxidizing conditions two disulfide bonds are formed involving the reactive cysteines. Under reducing conditions zinc is bound to the reactive cysteines and the protein is inactive.

The protein resides in the cytoplasm. In terms of biological role, redox regulated molecular chaperone. Protects both thermally unfolding and oxidatively damaged proteins from irreversible aggregation. Plays an important role in the bacterial defense system toward oxidative stress. The polypeptide is 33 kDa chaperonin (Neisseria meningitidis serogroup B (strain ATCC BAA-335 / MC58)).